The primary structure comprises 582 residues: Formate--tetrahydrofolate ligase (582 aa).

Thr-65–Thr-72 is an ATP binding site.

This sequence belongs to the formate--tetrahydrofolate ligase family.

The catalysed reaction is (6S)-5,6,7,8-tetrahydrofolate + formate + ATP = (6R)-10-formyltetrahydrofolate + ADP + phosphate. It participates in one-carbon metabolism; tetrahydrofolate interconversion. This Aliivibrio fischeri (strain ATCC 700601 / ES114) (Vibrio fischeri) protein is Formate--tetrahydrofolate ligase.